We begin with the raw amino-acid sequence, 141 residues long: VLSPADKTNVKAAWDKVGGHAGEYGAEALERMFLSFPTTKTYFPHFDLSHGSAQVKGHGKKVADALTLAVGHVDDMPHALSALSDLHAHKLRVDPVNFKLLSHCLLVTLAAHLPAEFTPAVHASLDKFLASVSTVLTSKYR.

Residues 1–141 (VLSPADKTNV…VSTVLTSKYR (141 aa)) form the Globin domain. Residue Ser-3 is modified to Phosphoserine. N6-succinyllysine is present on Lys-7. Thr-8 carries the post-translational modification Phosphothreonine. Residue Lys-11 is modified to N6-succinyllysine. Lys-16 carries the post-translational modification N6-acetyllysine; alternate. Lys-16 bears the N6-succinyllysine; alternate mark. Position 24 is a phosphotyrosine (Tyr-24). Ser-35 carries the post-translational modification Phosphoserine. The residue at position 40 (Lys-40) is an N6-succinyllysine. Ser-49 carries the post-translational modification Phosphoserine. Residue His-58 coordinates O2. Residue His-87 participates in heme b binding. Phosphoserine is present on Ser-102. Thr-108 is modified (phosphothreonine). A phosphoserine mark is found at Ser-124 and Ser-131. A phosphothreonine mark is found at Thr-134 and Thr-137. Phosphoserine is present on Ser-138.

Belongs to the globin family. Heterotetramer of two alpha chains and two beta chains. Red blood cells.

In terms of biological role, involved in oxygen transport from the lung to the various peripheral tissues. The chain is Hemoglobin subunit alpha-1/2 from Macaca speciosa (Stump-tail macaque).